The primary structure comprises 574 residues: MLSSVRLAALRAGKTNSVFQAVRAFAAEPAAAATTDAGFVSQVIGPVVDVRFDGELPSILSALEVQGHNVRLVLEVAQHMGDNTVRCVAMDSTDGLVRGQKVVNTGSPIKVPVGRGTLGRIMNVIGEPVDEQGPIECSEVWSIHREAPEFTEQSTEQEILVTGIKVVDLLAPYQRGGKIGLFGGAGVGKTVLIMELINNVAKAHGGFSVFAGVGERTREGNDLYREMIESGVIKLGDKRGESKCTLVYGQMNEPPGARARVALTGLTVAEYFRDVEGQDVLLFVDNIFRFTQANSEVSALLGRIPSAVGYQPTLATDLGGLQERITTTTKGSITSVQAVYVPADDLTDPAPATTFAHLDATTVLSRSIAELGIYPAVDPLDSTSRMLNPNIIGAEHYNIARGVQKVLQDYKNLQDIIAILGMDELSEEDKLTVARARKIQRFLSQPFQVAEVFTGTPGKYVDLKDTISAFTGILQGKYDDLPEMAFYMVGGIHEVVEKADKLAKDVAARKDESKKAKSSEALKDVPSLEKMAGEIKDEVIDADDSLEEDFKAEAISSENMVLNEKGEKVPLPKK.

The N-terminal 26 residues, 1 to 26, are a transit peptide targeting the mitochondrion; sequence MLSSVRLAALRAGKTNSVFQAVRAFA. 183 to 190 lines the ATP pocket; the sequence is GGAGVGKT.

Belongs to the ATPase alpha/beta chains family. F-type ATPases have 2 components, CF(1) - the catalytic core - and CF(0) - the membrane proton channel. CF(1) has five subunits: alpha(3), beta(3), gamma(1), delta(1), epsilon(1). CF(0) has three main subunits: a, b and c.

It is found in the mitochondrion. The protein localises to the mitochondrion inner membrane. The catalysed reaction is ATP + H2O + 4 H(+)(in) = ADP + phosphate + 5 H(+)(out). Mitochondrial membrane ATP synthase (F(1)F(0) ATP synthase or Complex V) produces ATP from ADP in the presence of a proton gradient across the membrane which is generated by electron transport complexes of the respiratory chain. F-type ATPases consist of two structural domains, F(1) - containing the extramembraneous catalytic core, and F(0) - containing the membrane proton channel, linked together by a central stalk and a peripheral stalk. During catalysis, ATP synthesis in the catalytic domain of F(1) is coupled via a rotary mechanism of the central stalk subunits to proton translocation. Subunits alpha and beta form the catalytic core in F(1). Rotation of the central stalk against the surrounding alpha(3)beta(3) subunits leads to hydrolysis of ATP in three separate catalytic sites on the beta subunits. In Chlamydomonas reinhardtii (Chlamydomonas smithii), this protein is ATP synthase subunit beta, mitochondrial (ATP2).